The primary structure comprises 943 residues: Isoleucine--tRNA ligase (943 aa).

Positions 58 to 68 (PYANGSIHIGH) match the 'HIGH' region motif. Glu-567 serves as a coordination point for L-isoleucyl-5'-AMP. The 'KMSKS' region motif lies at 608–612 (KMSKS). An ATP-binding site is contributed by Lys-611. The Zn(2+) site is built by Cys-906, Cys-909, Cys-926, and Cys-929.

This sequence belongs to the class-I aminoacyl-tRNA synthetase family. IleS type 1 subfamily. Monomer. Requires Zn(2+) as cofactor.

Its subcellular location is the cytoplasm. The enzyme catalyses tRNA(Ile) + L-isoleucine + ATP = L-isoleucyl-tRNA(Ile) + AMP + diphosphate. Catalyzes the attachment of isoleucine to tRNA(Ile). As IleRS can inadvertently accommodate and process structurally similar amino acids such as valine, to avoid such errors it has two additional distinct tRNA(Ile)-dependent editing activities. One activity is designated as 'pretransfer' editing and involves the hydrolysis of activated Val-AMP. The other activity is designated 'posttransfer' editing and involves deacylation of mischarged Val-tRNA(Ile). This Pseudomonas paraeruginosa (strain DSM 24068 / PA7) (Pseudomonas aeruginosa (strain PA7)) protein is Isoleucine--tRNA ligase.